Reading from the N-terminus, the 353-residue chain is Photosystem II protein D1 (353 aa).

An N-acetylthreonine modification is found at threonine 2. Residue threonine 2 is modified to Phosphothreonine. 3 consecutive transmembrane segments (helical) span residues 29 to 46 (YIGW…TATS), 118 to 133 (HFLL…EWEL), and 142 to 156 (WIAV…AAAA). Histidine 118 lines the chlorophyll a pocket. Tyrosine 126 provides a ligand contact to pheophytin a. [CaMn4O5] cluster-binding residues include aspartate 170 and glutamate 189. A helical transmembrane segment spans residues 197-218 (FHMLGVAGVFGGSLFSAMHGSL). Residue histidine 198 participates in chlorophyll a binding. A quinone contacts are provided by residues histidine 215 and 264–265 (SF). Histidine 215 is a Fe cation binding site. Residue histidine 272 participates in Fe cation binding. A helical membrane pass occupies residues 274–288 (FLAAWPVVGIWFTAL). [CaMn4O5] cluster is bound by residues histidine 332, glutamate 333, aspartate 342, and alanine 344. A propeptide spanning residues 345–353 (AVEAPSTNG) is cleaved from the precursor.

This sequence belongs to the reaction center PufL/M/PsbA/D family. In terms of assembly, PSII is composed of 1 copy each of membrane proteins PsbA, PsbB, PsbC, PsbD, PsbE, PsbF, PsbH, PsbI, PsbJ, PsbK, PsbL, PsbM, PsbT, PsbX, PsbY, PsbZ, Psb30/Ycf12, at least 3 peripheral proteins of the oxygen-evolving complex and a large number of cofactors. It forms dimeric complexes. It depends on The D1/D2 heterodimer binds P680, chlorophylls that are the primary electron donor of PSII, and subsequent electron acceptors. It shares a non-heme iron and each subunit binds pheophytin, quinone, additional chlorophylls, carotenoids and lipids. D1 provides most of the ligands for the Mn4-Ca-O5 cluster of the oxygen-evolving complex (OEC). There is also a Cl(-1) ion associated with D1 and D2, which is required for oxygen evolution. The PSII complex binds additional chlorophylls, carotenoids and specific lipids. as a cofactor. In terms of processing, tyr-161 forms a radical intermediate that is referred to as redox-active TyrZ, YZ or Y-Z. Post-translationally, C-terminally processed by CTPA; processing is essential to allow assembly of the oxygen-evolving complex and thus photosynthetic growth.

The protein resides in the plastid. Its subcellular location is the chloroplast thylakoid membrane. It carries out the reaction 2 a plastoquinone + 4 hnu + 2 H2O = 2 a plastoquinol + O2. Functionally, photosystem II (PSII) is a light-driven water:plastoquinone oxidoreductase that uses light energy to abstract electrons from H(2)O, generating O(2) and a proton gradient subsequently used for ATP formation. It consists of a core antenna complex that captures photons, and an electron transfer chain that converts photonic excitation into a charge separation. The D1/D2 (PsbA/PsbD) reaction center heterodimer binds P680, the primary electron donor of PSII as well as several subsequent electron acceptors. The chain is Photosystem II protein D1 from Panax ginseng (Korean ginseng).